The chain runs to 483 residues: Glutamyl-tRNA(Gln) amidotransferase subunit A (483 aa).

Active-site charge relay system residues include Lys-75 and Ser-150. Ser-174 acts as the Acyl-ester intermediate in catalysis.

The protein belongs to the amidase family. GatA subfamily. Heterotrimer of A, B and C subunits.

The enzyme catalyses L-glutamyl-tRNA(Gln) + L-glutamine + ATP + H2O = L-glutaminyl-tRNA(Gln) + L-glutamate + ADP + phosphate + H(+). Functionally, allows the formation of correctly charged Gln-tRNA(Gln) through the transamidation of misacylated Glu-tRNA(Gln) in organisms which lack glutaminyl-tRNA synthetase. The reaction takes place in the presence of glutamine and ATP through an activated gamma-phospho-Glu-tRNA(Gln). In Legionella pneumophila (strain Paris), this protein is Glutamyl-tRNA(Gln) amidotransferase subunit A.